The following is a 1573-amino-acid chain: Soluble scavenger receptor cysteine-rich domain-containing protein SSC5D (1573 aa).

Positions 1–16 (MRVLACLLAALVGIQA) are cleaved as a signal peptide. The SRCR 1 domain occupies 20–120 (LRLADGPHGC…HEEDAGVVCA (101 aa)). Disulfide bonds link Cys-45-Cys-109, Cys-58-Cys-119, and Cys-89-Cys-99. The interval 153 to 192 (EPLVTHAPRPAGNPQNASRKKSPRPKQAKSTRAPLLTTGA) is disordered. Asn-168 carries an N-linked (GlcNAc...) asparagine glycan. Residues 170 to 181 (SRKKSPRPKQAK) are compositionally biased toward basic residues. SRCR domains are found at residues 198 to 298 (LRLV…LVCT) and 304 to 404 (LRLA…AVCD). 6 cysteine pairs are disulfide-bonded: Cys-223–Cys-287, Cys-236–Cys-297, Cys-267–Cys-277, Cys-329–Cys-393, Cys-342–Cys-403, and Cys-373–Cys-383. N-linked (GlcNAc...) asparagine glycans are attached at residues Asn-376 and Asn-420. The disordered stretch occupies residues 412-465 (PPTAPTDSNNSTPREAASRPPSTMTSQAPGTAGVSPPPASPTVLWEPGPEAGSP). Positions 431–440 (PPSTMTSQAP) are enriched in polar residues. An SRCR 4 domain is found at 467-568 (LRLVAGPSKC…HNEDVGVTCT (102 aa)). Cystine bridges form between Cys-492–Cys-557, Cys-505–Cys-567, and Cys-537–Cys-547. Positions 614 to 769 (EKTTTKAPGK…SVSTTGESGL (156 aa)) are disordered. Residues 626-637 (KSTKKWVTKNAK) show a composition bias toward basic residues. The segment covering 654-671 (AQSPPDLTSQTTAALTTE) has biased composition (polar residues). Residues 672–685 (ASRRPTSEFTRRPT) are compositionally biased toward basic and acidic residues. Polar residues-rich tracts occupy residues 687 to 702 (EAPQ…TLTP) and 711 to 735 (KTMA…SIPQ). The region spanning 772–872 (VRLADGPNRC…HEEDVGLTCT (101 aa)) is the SRCR 5 domain. 3 disulfides stabilise this stretch: Cys-797-Cys-861, Cys-810-Cys-871, and Cys-841-Cys-851. Disordered stretches follow at residues 895 to 1475 (KGTT…PCVA) and 1554 to 1573 (MPAP…RGDV). The span at 924–934 (RLPDTGSKDGY) shows a compositional bias: basic and acidic residues. Pro residues-rich tracts occupy residues 1004 to 1020 (PPTP…PPGP) and 1083 to 1093 (TPEPSPTPLPT). Over residues 1101–1140 (DPSTPSEVTSLSPTSEQVPESDTTPDLDTTPYSSTVSEYS) the composition is skewed to polar residues. Positions 1144–1160 (DPSPSPHPTTTPDPTMA) are enriched in pro residues. Low complexity-rich tracts occupy residues 1161–1175 (PDPI…TPHF) and 1185–1277 (PHPT…MPHP). Over residues 1278–1328 (TTTPHPTTTPHPTTTPHPTTTPHPTMTPDPTTTPYPTTTPDPTTTPHPTTP) the composition is skewed to pro residues. Composition is skewed to polar residues over residues 1335-1354 (VITT…SPTL) and 1364-1380 (PQLT…TSQI). Low complexity predominate over residues 1381 to 1401 (PTLEPSPALESSPSRSSTATS). Over residues 1464 to 1475 (GQSPGPHGPCVA) the composition is skewed to pro residues.

In terms of assembly, interacts with LGALS1 and laminin. As to expression, highly expressed in monocytes/macrophages and T-lymphocytes. Highly expressed in placenta and spleen, and also detected at lower levels in colon, and more weakly in lung, heart and kidney.

It is found in the secreted. The protein resides in the cytoplasm. In terms of biological role, binds to extracellular matrix proteins. Binds to pathogen-associated molecular patterns (PAMPs) present on the cell walls of Gram-positive and Gram-negative bacteria and fungi, behaving as a pattern recognition receptor (PRR). Induces bacterial and fungal aggregation and subsequent inhibition of PAMP-induced cytokine release. Does not possess intrinsic bactericidal activity. May play a role in the innate defense and homeostasis of certain epithelial surfaces. The chain is Soluble scavenger receptor cysteine-rich domain-containing protein SSC5D (SSC5D) from Homo sapiens (Human).